Here is an 80-residue protein sequence, read N- to C-terminus: Small ribosomal subunit protein uS17 (80 aa).

It belongs to the universal ribosomal protein uS17 family. In terms of assembly, part of the 30S ribosomal subunit.

Functionally, one of the primary rRNA binding proteins, it binds specifically to the 5'-end of 16S ribosomal RNA. This is Small ribosomal subunit protein uS17 from Cereibacter sphaeroides (strain ATCC 17025 / ATH 2.4.3) (Rhodobacter sphaeroides).